The primary structure comprises 239 residues: Probable transcriptional regulator ycf27 (239 aa).

Residues K7–L120 form the Response regulatory domain. D56 carries the post-translational modification 4-aspartylphosphate. Residues D76–G94 constitute a DNA-binding region (H-T-H motif). The ompR/PhoB-type DNA-binding region spans G135–N236.

It is found in the plastid. Its subcellular location is the cyanelle. Functionally, probable promoter-specific protein mediating the interaction between DNA and RNA polymerase. The polypeptide is Probable transcriptional regulator ycf27 (ycf27) (Cyanophora paradoxa).